We begin with the raw amino-acid sequence, 458 residues long: Argininosuccinate lyase (458 aa).

It belongs to the lyase 1 family. Argininosuccinate lyase subfamily.

It is found in the cytoplasm. The catalysed reaction is 2-(N(omega)-L-arginino)succinate = fumarate + L-arginine. It functions in the pathway amino-acid biosynthesis; L-arginine biosynthesis; L-arginine from L-ornithine and carbamoyl phosphate: step 3/3. This is Argininosuccinate lyase from Buchnera aphidicola subsp. Baizongia pistaciae (strain Bp).